The sequence spans 259 residues: Indole-3-glycerol phosphate synthase (259 aa).

Belongs to the TrpC family.

The catalysed reaction is 1-(2-carboxyphenylamino)-1-deoxy-D-ribulose 5-phosphate + H(+) = (1S,2R)-1-C-(indol-3-yl)glycerol 3-phosphate + CO2 + H2O. The protein operates within amino-acid biosynthesis; L-tryptophan biosynthesis; L-tryptophan from chorismate: step 4/5. The sequence is that of Indole-3-glycerol phosphate synthase from Rhodopirellula baltica (strain DSM 10527 / NCIMB 13988 / SH1).